We begin with the raw amino-acid sequence, 293 residues long: Cell division protein FtsQ (293 aa).

Residues 1 to 27 lie on the Cytoplasmic side of the membrane; that stretch reads MRPLMRNRASERGVDPAPSRWAWRMQR. The chain crosses the membrane as a helical span at residues 28 to 48; sequence LLLTPAFLLFLRAGVPVLVLF. Topologically, residues 49 to 293 are periplasmic; that stretch reads GAATWWLSDT…WWEIRQVSRQ (245 aa). In terms of domain architecture, POTRA spans 81 to 149; it reads FMVQLMAVDG…GVLHIDVEPR (69 aa).

It belongs to the FtsQ/DivIB family. FtsQ subfamily.

It localises to the cell inner membrane. Functionally, essential cell division protein. The polypeptide is Cell division protein FtsQ (Roseobacter litoralis (strain ATCC 49566 / DSM 6996 / JCM 21268 / NBRC 15278 / OCh 149)).